The primary structure comprises 836 residues: General negative regulator of transcription subunit 3 (836 aa).

3 coiled-coil regions span residues 36–68, 119–195, and 255–292; these read NNPSQKDKLESDLKREVKKLQRLREQIKSWQSS, RERR…ANEE, and NTSDANESLQDISKLSKKEQRKLEREAKKAAKLAAKNA. Residues 252 to 267 are compositionally biased toward polar residues; that stretch reads EDNNTSDANESLQDIS. 4 disordered regions span residues 252–284, 296–391, 410–471, and 513–532; these read EDNNTSDANESLQDISKLSKKEQRKLEREAKKA, AIPV…LKPA, AVEK…NTGA, and NPKSEHEVATTVNQNGPENT. A compositionally biased stretch (basic and acidic residues) spans 268 to 283; it reads KLSKKEQRKLEREAKK. Residues Ser-303, Ser-307, and Ser-322 each carry the phosphoserine modification. The segment covering 341–386 has biased composition (polar residues); the sequence is SIKSPRSSADNLLPSLQKSPSSATPETPTNVHTHIHQTPNGITGAT. Low complexity predominate over residues 418 to 446; the sequence is TSASSTISNTSTKTPTTAAATTTSSNANS. Phosphoserine occurs at positions 446 and 450. Composition is skewed to polar residues over residues 447–468 and 522–531; these read RIGSALNTPKLSTSSLSLQPDN and TTVNQNGPEN. Lys-535 participates in a covalent cross-link: Glycyl lysine isopeptide (Lys-Gly) (interchain with G-Cter in ubiquitin). The disordered stretch occupies residues 537 to 583; sequence MEQKEEESPEERNKLQVPTFGVFDDDFESDRDSETEPEEEEQPSTPK. Residues 559 to 578 are compositionally biased toward acidic residues; that stretch reads FDDDFESDRDSETEPEEEEQ. Residues Ser-565 and Ser-569 each carry the phosphoserine modification. Thr-571 carries the phosphothreonine modification. Ser-657 is modified (phosphoserine). Positions 803–831 form a coiled coil; that stretch reads NVNDQSNVTLEQQKQEISHGKQLLKQLKQ.

It belongs to the CNOT2/3/5 family. In terms of assembly, forms a NOT protein complex that comprises NOT1, NOT2, NOT3, NOT4 and NOT5. Subunit of the 1.0 MDa CCR4-NOT core complex that contains CCR4, CAF1, NOT1, NOT2, NOT3, NOT4, NOT5, CAF40 and CAF130. The core complex probably is part of a less characterized 1.9 MDa CCR4-NOT complex.

It is found in the cytoplasm. The protein resides in the nucleus. In terms of biological role, acts as a component of the CCR4-NOT core complex, which in the nucleus seems to be a general transcription factor, and in the cytoplasm the major mRNA deadenylase involved in mRNA turnover. The NOT protein subcomplex negatively regulates the basal and activated transcription of many genes. Preferentially affects TC-type TATA element-dependent transcription. Could directly or indirectly inhibit component(s) of the general transcription machinery. The sequence is that of General negative regulator of transcription subunit 3 (NOT3) from Saccharomyces cerevisiae (strain ATCC 204508 / S288c) (Baker's yeast).